The sequence spans 372 residues: Ubl carboxyl-terminal hydrolase 18 (372 aa).

Residues Ser-19–Pro-45 are disordered. Residues Leu-26 to Pro-45 are compositionally biased toward basic and acidic residues. The mediates interaction with IFNAR2 stretch occupies residues Met-36–Pro-51. Residues Pro-51–Asp-112 are mediates interaction with STAT2. A USP domain is found at Val-55–Met-370. The active-site Nucleophile is the Cys-64. The mediates interaction with STAT2 and necessary for the negative regulation of the type I IFN signaling pathway stretch occupies residues Glu-303–Gly-312. Positions Met-313–Cys-372 are mediates interaction with IFNAR2. Catalysis depends on His-318, which acts as the Proton acceptor.

It belongs to the peptidase C19 family. Interacts with STAT2; the interaction is direct. Interacts with IFNAR2; indirectly via STAT2, it negatively regulates the assembly of the ternary interferon-IFNAR1-IFNAR2 complex and inhibits type I interferon signaling. Interacts with STING1. Interacts with USP20.

The protein localises to the cytoplasm. Its subcellular location is the nucleus. The enzyme catalyses Thiol-dependent hydrolysis of ester, thioester, amide, peptide and isopeptide bonds formed by the C-terminal Gly of ubiquitin (a 76-residue protein attached to proteins as an intracellular targeting signal).. Its function is as follows. Interferon-induced ISG15-specific protease that plays a crucial role for maintaining a proper balance of ISG15-conjugated proteins in cells. Regulates protein ISGylation by efficiently cleaving ISG15 conjugates linked via isopeptide bonds. Regulates T-cell activation and T-helper 17 (Th17) cell differentiation by deubiquitinating TAK1, likely to keep TAK1-TAB complexes in steady conditions. In turn, restricts activation of NF-kappa-B, NFAT, and JNK as well as expression of IL2 in T-cells after TCR activation. Acts as a molecular adapter with USP20 to promote innate antiviral response through deubiquitinating STING1. Involved also in the negative regulation of the inflammatory response triggered by type I interferon. Upon recruitment by STAT2 to the type I interferon receptor subunit IFNAR2 interferes with the assembly of the ternary interferon-IFNAR1-IFNAR2 complex and acts as a negative regulator of the type I interferon signaling pathway. In terms of biological role, has enzymatic activity similar to isoform 1 and interferes with type I interferon signaling. Major deISGylation enzyme for nuclear proteins. This Homo sapiens (Human) protein is Ubl carboxyl-terminal hydrolase 18 (USP18).